Consider the following 361-residue polypeptide: uncharacterized protein (361 aa).

The signal sequence occupies residues 1-17; the sequence is MNLFIYVLLLSIWTSSC. Residues 18-47 are Extracellular-facing; it reads LDRNESNGSATAVTTHAEFKQTKLQELRRR. N-linked (GlcNAc...) asparagine glycosylation occurs at Asn24. The helical transmembrane segment at 48 to 68 threads the bilayer; the sequence is LLIIVIGTLITGYMVSCTCLL. Over 69-361 the chain is Cytoplasmic; the sequence is HYSCDSEEAH…EDIYKNSRNN (293 aa). Over residues 95-106 the composition is skewed to polar residues; it reads SSKISFTDSKSP. Positions 95–197 are disordered; that stretch reads SSKISFTDSK…SQVSPSYPEK (103 aa). The segment covering 144–158 has biased composition (low complexity); it reads PSSQKKPSKPSAPKK. Residues 169–185 are compositionally biased toward basic residues; that stretch reads HRTRSPKKAHRQAHAHK.

The protein resides in the membrane. This is an uncharacterized protein from Bos taurus (Bovine).